Reading from the N-terminus, the 168-residue chain is MPRSRINGNFIDKTSSIVANILLRIIPTTSGEKEAFTYYRDGMSAQSEGNYAEALQNYYEATRLEIDPYDRSYILYNIGLIHTSNGEHTKALEYYFRAIERNPFLPQAFNNMAVICHYRGEQAIRQGDSEIAEAWSDQAAEYWKQAIALTPGNYIEAHNWLKIARRFE.

TPR repeat units lie at residues 35–68 (AFTYYRDGMSAQSEGNYAEALQNYYEATRLEIDP), 72–105 (SYILYNIGLIHTSNGEHTKALEYYFRAIERNPFL), and 120–153 (GEQAIRQGDSEIAEAWSDQAAEYWKQAIALTPGN).

Belongs to the Ycf3 family.

The protein resides in the plastid. Its subcellular location is the chloroplast thylakoid membrane. In terms of biological role, essential for the assembly of the photosystem I (PSI) complex. May act as a chaperone-like factor to guide the assembly of the PSI subunits. The protein is Photosystem I assembly protein Ycf3 of Calycanthus floridus var. glaucus (Eastern sweetshrub).